Here is a 115-residue protein sequence, read N- to C-terminus: Large ribosomal subunit protein bL20 (115 aa).

Belongs to the bacterial ribosomal protein bL20 family.

Functionally, binds directly to 23S ribosomal RNA and is necessary for the in vitro assembly process of the 50S ribosomal subunit. It is not involved in the protein synthesizing functions of that subunit. The sequence is that of Large ribosomal subunit protein bL20 from Chlorobium chlorochromatii (strain CaD3).